We begin with the raw amino-acid sequence, 2587 residues long: Protein KINKY POLLEN (2587 aa).

The N-terminal stretch at 1 to 27 is a signal peptide; the sequence is MAAFLVMFIFTIALFVALLWVFFKSLP. N-linked (GlcNAc...) asparagine glycosylation is present at N71. Residues 103 to 124 form a disordered region; it reads PSHSSKGPRKPKTRKSSSGGKG. Residues 108–117 are compositionally biased toward basic residues; sequence KGPRKPKTRK. 3 N-linked (GlcNAc...) asparagine glycosylation sites follow: N262, N281, and N485. The interval 270–290 is disordered; it reads SKGEVIDSSSGNTTSEKPPKQ. Over residues 276 to 285 the composition is skewed to polar residues; sequence DSSSGNTTSE. Residues 589–611 are disordered; that stretch reads GSSSKNKQEKGAHRSKPPSGRGT. A coiled-coil region spans residues 691–716; that stretch reads TLNKEIQSTQVELETAKAIYQEFLEE. A disordered region spans residues 784 to 814; the sequence is QHGNRNPEEASTVTGDKQKEEPTTTPNSLDK. N-linked (GlcNAc...) asparagine glycans are attached at residues N1155, N1250, N1281, and N1486. Disordered regions lie at residues 1571-1608, 1646-1673, and 1729-1797; these read HCSK…KHPD, VDAR…DGYN, and EGNQ…PEEE. Residues 1576-1590 are compositionally biased toward polar residues; the sequence is AQMSRTSSLSGSTDR. Residue N1595 is glycosylated (N-linked (GlcNAc...) asparagine). Basic and acidic residues predominate over residues 1646–1666; sequence VDARSTKEKQSEPEENSHSDP. The span at 1746–1760 shows a compositional bias: polar residues; sequence KQPSTGSGNLASQSK. N1861, N1951, N1981, N2036, and N2278 each carry an N-linked (GlcNAc...) asparagine glycan. Residues 2006–2036 adopt a coiled-coil conformation; the sequence is IEEVELAKIELEAKERDRMMLLDDIRKLTQN. The segment covering 2274–2287 has biased composition (polar residues); sequence QGSKNQSLKSSTIR. 3 disordered regions span residues 2274–2299, 2319–2360, and 2442–2469; these read QGSK…TSSF, SMEH…KKSR, and KDDI…RPGD. Composition is skewed to basic and acidic residues over residues 2289-2299, 2322-2336, 2343-2359, and 2442-2458; these read SGRELRRTSSF, HQGE…DSKT, SVHE…DKKS, and KDDI…RTDQ. N-linked (GlcNAc...) asparagine glycans are attached at residues N2513 and N2544. Residues 2533–2587 are disordered; that stretch reads IRRHSKKFQNQNTTKGSKKTQLSPTLSPPKEEDQYESDSSSGSSAYEEFLDQNQI. Polar residues predominate over residues 2540 to 2557; sequence FQNQNTTKGSKKTQLSPT. Positions 2569 to 2579 are enriched in low complexity; it reads SDSSSGSSAYE.

This sequence belongs to the SABRE family. In terms of tissue distribution, mostly expressed in pollen and roots, especially in tip-growing cells, but also present in seedlings, stems, leaves, buds, flowers, siliques and seeds.

Its subcellular location is the secreted. It is found in the golgi apparatus. In terms of biological role, may be involved in membrane trafficking. Required for tip growth in pollen tubes and root hairs. The sequence is that of Protein KINKY POLLEN from Arabidopsis thaliana (Mouse-ear cress).